A 127-amino-acid chain; its full sequence is Holo-[acyl-carrier-protein] synthase (127 aa).

Mg(2+) is bound by residues Asp-7 and Glu-56.

The protein belongs to the P-Pant transferase superfamily. AcpS family. It depends on Mg(2+) as a cofactor.

It localises to the cytoplasm. It carries out the reaction apo-[ACP] + CoA = holo-[ACP] + adenosine 3',5'-bisphosphate + H(+). In terms of biological role, transfers the 4'-phosphopantetheine moiety from coenzyme A to a Ser of acyl-carrier-protein. The chain is Holo-[acyl-carrier-protein] synthase from Leptospira biflexa serovar Patoc (strain Patoc 1 / Ames).